The sequence spans 320 residues: Aspartate carbamoyltransferase catalytic subunit (320 aa).

Carbamoyl phosphate contacts are provided by R70 and T71. Residue K98 coordinates L-aspartate. Carbamoyl phosphate contacts are provided by R120, H149, and Q152. R182 and R237 together coordinate L-aspartate. Carbamoyl phosphate contacts are provided by G278 and P279.

It belongs to the aspartate/ornithine carbamoyltransferase superfamily. ATCase family. As to quaternary structure, heterododecamer (2C3:3R2) of six catalytic PyrB chains organized as two trimers (C3), and six regulatory PyrI chains organized as three dimers (R2).

It carries out the reaction carbamoyl phosphate + L-aspartate = N-carbamoyl-L-aspartate + phosphate + H(+). It functions in the pathway pyrimidine metabolism; UMP biosynthesis via de novo pathway; (S)-dihydroorotate from bicarbonate: step 2/3. In terms of biological role, catalyzes the condensation of carbamoyl phosphate and aspartate to form carbamoyl aspartate and inorganic phosphate, the committed step in the de novo pyrimidine nucleotide biosynthesis pathway. The protein is Aspartate carbamoyltransferase catalytic subunit of Ruthia magnifica subsp. Calyptogena magnifica.